Reading from the N-terminus, the 1674-residue chain is E3 ubiquitin-protein ligase SHPRH (1674 aa).

The tract at residues 1-26 is disordered; that stretch reads MSSRRKRAPPMKVDEERQQQLHWNMH. Positions 12–26 are enriched in basic and acidic residues; sequence KVDEERQQQLHWNMH. Phosphoserine is present on residues serine 259 and serine 261. The 83-residue stretch at 302–384 folds into the Helicase ATP-binding; first part domain; the sequence is YQREAVNWML…TVEVLALILT (83 aa). An ATP-binding site is contributed by 368–375; the sequence is DEMGLGKT. One can recognise an H15 domain in the interval 433 to 507; sequence HCPPTRVMIL…GFSGTFTLGK (75 aa). The tract at residues 524–548 is disordered; the sequence is SPRKIEKELRKSVNKDADSEYLPSN. Over residues 526-541 the composition is skewed to basic and acidic residues; sequence RKIEKELRKSVNKDAD. Phosphoserine is present on serine 626. Residues 649–700 form a PHD-type zinc finger; the sequence is RFECICGEFDQIGHKPRVQCLKCHLWQHAKCVNYEEKNLKVKPFYCPHCLVA. The Helicase ATP-binding; second part domain occupies 701–859; that stretch reads MEPVSTRATL…FGLVVFLGIE (159 aa). A DEAQ box motif is present at residues 810–813; it reads DEAQ. An RING-type zinc finger spans residues 1423–1470; the sequence is CPICARQLGKQWAVLTCGHCFCNECTSIIIEQYSVGSHRSSIKCAICR. In terms of domain architecture, Helicase C-terminal spans 1505 to 1663; sequence AVVRTLMKIQ…ASVLTVAGLA (159 aa).

Belongs to the SNF2/RAD54 helicase family. In terms of assembly, homodimer. Interacts with HLTF, PCNA, UBE2N and RAD18. In terms of tissue distribution, broadly expressed (at protein level).

The catalysed reaction is S-ubiquitinyl-[E2 ubiquitin-conjugating enzyme]-L-cysteine + [acceptor protein]-L-lysine = [E2 ubiquitin-conjugating enzyme]-L-cysteine + N(6)-ubiquitinyl-[acceptor protein]-L-lysine.. Its pathway is protein modification; protein ubiquitination. In terms of biological role, E3 ubiquitin-protein ligase involved in DNA repair. Upon genotoxic stress, accepts ubiquitin from the UBE2N-UBE2V2 E2 complex and transfers it to 'Lys-164' of PCNA which had been monoubiquitinated by UBE2A/B-RAD18, promoting the formation of non-canonical poly-ubiquitin chains linked through 'Lys-63'. In Mus musculus (Mouse), this protein is E3 ubiquitin-protein ligase SHPRH (Shprh).